We begin with the raw amino-acid sequence, 122 residues long: MTSPHNHMAYLKHHVLMTVDADHHRSLRTRLGTQHVLTKIQGIKTKESHGAFQFAEDKARLEAVSRSILLKRARTNKNKNALKEINVEKVDSILVTSEAVHDDIDEIYHATIEDECGILNQD.

The protein belongs to the herpesviridae UL96 family.

The chain is Protein U68 from Elephas maximus (Indian elephant).